The chain runs to 239 residues: Tetraspanin-9 (239 aa).

Topologically, residues 1-13 (MARGCLCCLKYMM) are cytoplasmic. A helical transmembrane segment spans residues 14–34 (FLFNLIFWLCGCGLLGVGIWL). Residues 35 to 55 (SVSQGNFATFSPSFPSLSAAN) are Extracellular-facing. A helical transmembrane segment spans residues 56 to 76 (LVIAIGTIVMVTGFLGCLGAI). The Cytoplasmic portion of the chain corresponds to 77-85 (KENRCLLLS). The helical transmembrane segment at 86–106 (FFIVLLIILLAELILIILFFV) threads the bilayer. The Extracellular portion of the chain corresponds to 107-203 (YMDKVNENAR…VKMWFDDNKH (97 aa)). N-linked (GlcNAc...) asparagine glycosylation is present at Asn180. A helical membrane pass occupies residues 204-224 (VLGTVGMCILIMQILGMAFSM). Residues 225–239 (TLFQHIHRTGKKYDA) lie on the Cytoplasmic side of the membrane.

The protein belongs to the tetraspanin (TM4SF) family. As to quaternary structure, found in a complex with GP6. Post-translationally, glycosylated.

The protein localises to the membrane. The protein is Tetraspanin-9 (TSPAN9) of Sus scrofa (Pig).